The sequence spans 744 residues: MDSLYVEEVAASLVREFLSRKGLNKTFVTMDQERPRCELSINSRNDLRKVLHLEFLYKENKAKEKPLRTNLELITRYFLDNVGNTDNSESQEVPIPAIPVPKKNNKLPLRHSETTLVNIYDLSDEDTGRRTSWSEAGKARHDSLDGDILGNFVSSKKPSHKSKAAHVDLGDSLPLVPAWEKVDQLHSSEPGIDVKKTMERTRPKSGLIVRGMMAGPVASSPQDSFRKRSLRRSSALSRKLQTPEEIQQQSEPFVHTPAYLGPQEVPDSSSDSVSRSPLGQLNELSIEKPNVTSSSQGLSQRDRPRLRSVSEDSPLGYSHTEGNSRMAQDQLERAFKRQGVQPPSLRKNQLVSDRTDDKPDALQLEDVEDELIKEDIVLFPPPSMLKLQTVSKPIDLSLAKEIKTLLFGSTFCCFSEEWKLQNFSFNDIASLKYGIVQNKGGPCGVLAAVQGCVLQKLLFEGDNRTNSNLRLQPSDAQRTRCLALAIADILWRAGGKEQAVVALASGTPHFSPTGKYKADGVLETLTLYSLTSSEDLVTFIQQSVHQFEAGPYGCILLTLSAILSRSLELVRQDFDVPTSHLIGAHGYCTQELVNLLLTGRAVSNVFNDVVELDSGDGNITLLRGIEARSDIGFLSLFEHYNVCQVGCFLKTPRFPIWVVCSESHFSILFSLQPELLCDWRSERLFDLYYYDGLANQQEEIRLTVDTTKTAPADSCSDLVPPLELCIRTKWKGASVNWNGSDPIL.

Residues Ser-143, Ser-220, and Ser-224 each carry the phosphoserine modification. The interval Gly-211–Lys-358 is disordered. The span at Val-265 to Pro-277 shows a compositional bias: low complexity. The segment covering Asn-290 to Ser-299 has biased composition (polar residues). The residue at position 295 (Ser-295) is a Phosphoserine. Residues Gln-300–Ser-310 are compositionally biased toward basic and acidic residues. Residue Cys-443 is the Nucleophile of the active site. The active-site Proton acceptor is His-664.

It belongs to the MINDY deubiquitinase family. FAM188 subfamily.

The enzyme catalyses Thiol-dependent hydrolysis of ester, thioester, amide, peptide and isopeptide bonds formed by the C-terminal Gly of ubiquitin (a 76-residue protein attached to proteins as an intracellular targeting signal).. In terms of biological role, probable hydrolase that can remove 'Lys-48'-linked conjugated ubiquitin from proteins. This chain is Probable ubiquitin carboxyl-terminal hydrolase MINDY-4 (Mindy4), found in Mus musculus (Mouse).